The chain runs to 384 residues: Ribosomal RNA small subunit methyltransferase H (384 aa).

S-adenosyl-L-methionine-binding positions include 99–101, aspartate 118, tyrosine 145, aspartate 169, and glutamine 176; that span reads GGH.

This sequence belongs to the methyltransferase superfamily. RsmH family.

It is found in the cytoplasm. It carries out the reaction cytidine(1402) in 16S rRNA + S-adenosyl-L-methionine = N(4)-methylcytidine(1402) in 16S rRNA + S-adenosyl-L-homocysteine + H(+). Its function is as follows. Specifically methylates the N4 position of cytidine in position 1402 (C1402) of 16S rRNA. This Mycobacteroides abscessus (strain ATCC 19977 / DSM 44196 / CCUG 20993 / CIP 104536 / JCM 13569 / NCTC 13031 / TMC 1543 / L948) (Mycobacterium abscessus) protein is Ribosomal RNA small subunit methyltransferase H.